A 360-amino-acid chain; its full sequence is Membrane-bound lytic murein transglycosylase C (360 aa).

The first 16 residues, 1–16 (MKKIFALALIAPLLIS), serve as a signal peptide directing secretion. Residue Cys17 is the site of N-palmitoyl cysteine attachment. Cys17 carries S-diacylglycerol cysteine lipidation.

It belongs to the transglycosylase Slt family.

The protein resides in the cell outer membrane. The catalysed reaction is Exolytic cleavage of the (1-&gt;4)-beta-glycosidic linkage between N-acetylmuramic acid (MurNAc) and N-acetylglucosamine (GlcNAc) residues in peptidoglycan, from either the reducing or the non-reducing ends of the peptidoglycan chains, with concomitant formation of a 1,6-anhydrobond in the MurNAc residue.. Murein-degrading enzyme. May play a role in recycling of muropeptides during cell elongation and/or cell division. This chain is Membrane-bound lytic murein transglycosylase C, found in Cronobacter sakazakii (strain ATCC BAA-894) (Enterobacter sakazakii).